Consider the following 150-residue polypeptide: MIVIINASNEQHDLKFSLANLDAIVKEVIQKEQQTCDEVNIYFVDTATICKLHLDYFNDDTPTDCISFPMDKDENSPYKILGEIFVCPQTAIEYALSHELDPYEETTLYLVHGLLHLMGYDDLEENDFLIMKEAEIRHMTHLKKLELYIK.

The Zn(2+) site is built by His-112, His-116, and Asp-122.

Belongs to the endoribonuclease YbeY family. Zn(2+) is required as a cofactor.

The protein resides in the cytoplasm. Its function is as follows. Single strand-specific metallo-endoribonuclease involved in late-stage 70S ribosome quality control and in maturation of the 3' terminus of the 16S rRNA. The chain is Endoribonuclease YbeY from Protochlamydia amoebophila (strain UWE25).